Consider the following 1146-residue polypeptide: ATP-dependent helicase/deoxyribonuclease subunit B (1146 aa).

One can recognise a UvrD-like helicase ATP-binding domain in the interval 1–280; sequence MSLRFIYGRA…LNSKPLFRFS (280 aa). Residue 8 to 15 coordinates ATP; the sequence is GRAGSGKT. In terms of domain architecture, UvrD-like helicase C-terminal spans 276 to 584; it reads LFRFSQSPEL…LVGSLERSRS (309 aa). Positions 786, 1105, 1108, and 1114 each coordinate [4Fe-4S] cluster.

Belongs to the helicase family. AddB/RexB type 1 subfamily. In terms of assembly, heterodimer of AddA and AddB. Mg(2+) serves as cofactor. The cofactor is [4Fe-4S] cluster.

Functionally, the heterodimer acts as both an ATP-dependent DNA helicase and an ATP-dependent, dual-direction single-stranded exonuclease. Recognizes the chi site generating a DNA molecule suitable for the initiation of homologous recombination. The AddB subunit has 5' -&gt; 3' nuclease activity but not helicase activity. The protein is ATP-dependent helicase/deoxyribonuclease subunit B of Acetivibrio thermocellus (strain ATCC 27405 / DSM 1237 / JCM 9322 / NBRC 103400 / NCIMB 10682 / NRRL B-4536 / VPI 7372) (Clostridium thermocellum).